Reading from the N-terminus, the 326-residue chain is GTP 3',8-cyclase (326 aa).

A Radical SAM core domain is found at 7–232 (GFGRSFPYLR…PRAADAGPAR (226 aa)). R16 contributes to the GTP binding site. [4Fe-4S] cluster is bound by residues C23 and C27. S-adenosyl-L-methionine is bound at residue Y29. Residue C30 coordinates [4Fe-4S] cluster. R65 contributes to the GTP binding site. Residue G69 coordinates S-adenosyl-L-methionine. T96 is a GTP binding site. S120 serves as a coordination point for S-adenosyl-L-methionine. Position 157 (K157) interacts with GTP. M191 lines the S-adenosyl-L-methionine pocket. [4Fe-4S] cluster-binding residues include C254 and C257. A GTP-binding site is contributed by 259–261 (RLR). C271 serves as a coordination point for [4Fe-4S] cluster.

Belongs to the radical SAM superfamily. MoaA family. Monomer and homodimer. The cofactor is [4Fe-4S] cluster.

It catalyses the reaction GTP + AH2 + S-adenosyl-L-methionine = (8S)-3',8-cyclo-7,8-dihydroguanosine 5'-triphosphate + 5'-deoxyadenosine + L-methionine + A + H(+). The protein operates within cofactor biosynthesis; molybdopterin biosynthesis. Its function is as follows. Catalyzes the cyclization of GTP to (8S)-3',8-cyclo-7,8-dihydroguanosine 5'-triphosphate. The protein is GTP 3',8-cyclase of Stenotrophomonas maltophilia (strain K279a).